The sequence spans 395 residues: Neuromedin-U receptor 2 (395 aa).

Residues Met-1–Ser-41 are Extracellular-facing. N-linked (GlcNAc...) asparagine glycosylation is found at Asn-6 and Asn-19. Residues Val-42–Ile-62 traverse the membrane as a helical segment. The Cytoplasmic portion of the chain corresponds to Val-63–Tyr-74. Residues Tyr-75–Ile-95 form a helical membrane-spanning segment. The Extracellular portion of the chain corresponds to Tyr-96–Thr-115. Cys-111 and Cys-196 are joined by a disulfide. A helical transmembrane segment spans residues Ala-116–Val-138. The Cytoplasmic portion of the chain corresponds to Ala-139–Arg-157. Residues Ile-158–Gly-178 form a helical membrane-spanning segment. The Extracellular segment spans residues Ile-179–Thr-212. An N-linked (GlcNAc...) asparagine glycan is attached at Asn-186. A helical membrane pass occupies residues Ser-213–Leu-233. The Cytoplasmic portion of the chain corresponds to Arg-234–Ser-257. Residues Val-258–Val-278 form a helical membrane-spanning segment. Residues Asp-279–Leu-293 lie on the Extracellular side of the membrane. A helical transmembrane segment spans residues Ala-294 to Val-314. Over Asn-315–Pro-395 the chain is Cytoplasmic. The interval Phe-374–Pro-395 is disordered. Over residues Pro-375 to Thr-387 the composition is skewed to polar residues.

It belongs to the G-protein coupled receptor 1 family. As to expression, the highest level is detected in the uterus. In the central nervous system, high expression levels were found in the hypothalamus and moderate levels in both the medulla oblongata and spinal cord. Expressed in the hypothalamic paraventricular nucleus (PVN) and suprachiasmatic nuclei (SCN) of the hypothalamus. Expression is low in the gastrointestinal tract. In other peripheral tissues, moderate expression was observed in the lung and ovary.

It localises to the cell membrane. In terms of biological role, receptor for the neuromedin-U and neuromedin-S neuropeptides. The polypeptide is Neuromedin-U receptor 2 (Nmur2) (Rattus norvegicus (Rat)).